Reading from the N-terminus, the 127-residue chain is Mating pheromone 4 (127 aa).

Residues 1 to 16 (MKAIFIILAILMVTQA) form the signal peptide. Residues 17–42 (FKMTSKVKSMNMSRNMSKNTSTLGTK) constitute a propeptide that is removed on maturation.

The protein localises to the secreted. Mating ciliate pheromones (or gamones) are diffusible extracellular communication signals that distinguish different intraspecific classes of cells commonly referred to as 'mating types'. They prepare the latter for conjugation by changing their cell surface properties. In Euplotoides octocarinatus (Freshwater ciliate), this protein is Mating pheromone 4 (PHR4).